The chain runs to 318 residues: Ribosomal RNA small subunit methyltransferase H (318 aa).

S-adenosyl-L-methionine-binding positions include 34–36 (GGH), Asp-57, Leu-91, Asp-110, and Gln-117.

It belongs to the methyltransferase superfamily. RsmH family.

The protein localises to the cytoplasm. It carries out the reaction cytidine(1402) in 16S rRNA + S-adenosyl-L-methionine = N(4)-methylcytidine(1402) in 16S rRNA + S-adenosyl-L-homocysteine + H(+). Its function is as follows. Specifically methylates the N4 position of cytidine in position 1402 (C1402) of 16S rRNA. The chain is Ribosomal RNA small subunit methyltransferase H from Chlorobaculum parvum (strain DSM 263 / NCIMB 8327) (Chlorobium vibrioforme subsp. thiosulfatophilum).